A 687-amino-acid polypeptide reads, in one-letter code: DNA-directed RNA polymerase subunit beta' (687 aa).

Cysteine 69, cysteine 71, cysteine 87, and cysteine 90 together coordinate Zn(2+). Mg(2+) is bound by residues aspartate 493, aspartate 495, and aspartate 497.

This sequence belongs to the RNA polymerase beta' chain family. RpoC1 subfamily. As to quaternary structure, in plastids the minimal PEP RNA polymerase catalytic core is composed of four subunits: alpha, beta, beta', and beta''. When a (nuclear-encoded) sigma factor is associated with the core the holoenzyme is formed, which can initiate transcription. It depends on Mg(2+) as a cofactor. Requires Zn(2+) as cofactor.

It is found in the plastid. The protein localises to the chloroplast. It carries out the reaction RNA(n) + a ribonucleoside 5'-triphosphate = RNA(n+1) + diphosphate. Functionally, DNA-dependent RNA polymerase catalyzes the transcription of DNA into RNA using the four ribonucleoside triphosphates as substrates. The chain is DNA-directed RNA polymerase subunit beta' from Angiopteris evecta (Mule's foot fern).